Reading from the N-terminus, the 99-residue chain is Aspartyl/glutamyl-tRNA(Asn/Gln) amidotransferase subunit C (99 aa).

The protein belongs to the GatC family. As to quaternary structure, heterotrimer of A, B and C subunits.

It catalyses the reaction L-glutamyl-tRNA(Gln) + L-glutamine + ATP + H2O = L-glutaminyl-tRNA(Gln) + L-glutamate + ADP + phosphate + H(+). The enzyme catalyses L-aspartyl-tRNA(Asn) + L-glutamine + ATP + H2O = L-asparaginyl-tRNA(Asn) + L-glutamate + ADP + phosphate + 2 H(+). In terms of biological role, allows the formation of correctly charged Asn-tRNA(Asn) or Gln-tRNA(Gln) through the transamidation of misacylated Asp-tRNA(Asn) or Glu-tRNA(Gln) in organisms which lack either or both of asparaginyl-tRNA or glutaminyl-tRNA synthetases. The reaction takes place in the presence of glutamine and ATP through an activated phospho-Asp-tRNA(Asn) or phospho-Glu-tRNA(Gln). This Polaromonas sp. (strain JS666 / ATCC BAA-500) protein is Aspartyl/glutamyl-tRNA(Asn/Gln) amidotransferase subunit C.